A 92-amino-acid chain; its full sequence is Small ribosomal subunit protein uS19c (92 aa).

It belongs to the universal ribosomal protein uS19 family.

It is found in the plastid. The protein localises to the chloroplast. Protein S19 forms a complex with S13 that binds strongly to the 16S ribosomal RNA. The protein is Small ribosomal subunit protein uS19c of Chaetosphaeridium globosum (Charophycean green alga).